The following is a 529-amino-acid chain: Lysophosphatidylcholine acyltransferase 2 (529 aa).

Over 1-50 (MPPPHRVFALPRQQSLLLPAVINPFVHDLSLSTADITKCFLLGIILVPLR) the chain is Cytoplasmic. A helical; Signal-anchor for type II membrane protein membrane pass occupies residues 51–71 (AIFLLLVLLVMWPVSVIITFG). The Lumenal segment spans residues 72 to 529 (QSLKGVVEPM…EDSASDKKDD (458 aa)). The HXXXXD motif motif lies at 128–133 (HSSFFD). The EGTC motif motif lies at 202–205 (EGTC). Residue asparagine 207 is glycosylated (N-linked (GlcNAc...) asparagine). EF-hand domains are found at residues 373-408 (PISP…LCRP), 410-445 (NNEE…ALGV), and 449-480 (DVHS…HPEY). Residues aspartate 386, asparagine 388, aspartate 390, threonine 392, glutamate 397, aspartate 423, aspartate 425, aspartate 427, cysteine 429, glutamate 434, aspartate 458, aspartate 460, serine 462, histidine 464, and glutamate 469 each coordinate Ca(2+).

It belongs to the 1-acyl-sn-glycerol-3-phosphate acyltransferase family.

It is found in the endoplasmic reticulum membrane. It localises to the golgi apparatus membrane. Its subcellular location is the cell membrane. The protein localises to the lipid droplet. It carries out the reaction a 1-acyl-sn-glycero-3-phosphocholine + an acyl-CoA = a 1,2-diacyl-sn-glycero-3-phosphocholine + CoA. The enzyme catalyses a 1-O-alkyl-sn-glycero-3-phosphocholine + acetyl-CoA = a 1-O-alkyl-2-acetyl-sn-glycero-3-phosphocholine + CoA. It catalyses the reaction a 1-acyl-sn-glycero-3-phosphate + an acyl-CoA = a 1,2-diacyl-sn-glycero-3-phosphate + CoA. The catalysed reaction is a 1-O-(1Z-alkenyl)-sn-glycero-3-phosphocholine + an acyl-CoA = a 1-O-(1Z-alkenyl)-2-acyl-sn-glycero-3-phosphocholine + CoA. It carries out the reaction 1-hexadecanoyl-sn-glycero-3-phosphate + (9Z)-octadecenoyl-CoA = 1-hexadecanoyl-2-(9Z-octadecenoyl)-sn-glycero-3-phosphate + CoA. The enzyme catalyses 1-(9Z-octadecenoyl)-sn-glycero-3-phosphate + (9Z)-octadecenoyl-CoA = 1,2-di-(9Z-octadecenoyl)-sn-glycero-3-phosphate + CoA. It catalyses the reaction 1-(9Z-octadecenoyl)-sn-glycero-3-phosphate + hexadecanoyl-CoA = 1-(9Z)-octadecenoyl-2-hexadecanoyl-sn-glycero-3-phosphate + CoA. The catalysed reaction is 1-heptadecanoyl-sn-glycero-3-phosphate + (9Z)-octadecenoyl-CoA = 1-heptadecanoyl-2-(9Z)-octadecenoyl-sn-glycero-3-phosphate + CoA. It carries out the reaction 1-octadecanoyl-sn-glycero-3-phosphate + (9Z)-octadecenoyl-CoA = 1-octadecanoyl-2-(9Z-octadecenoyl)-sn-glycero-3-phosphate + CoA. The enzyme catalyses heptadecanoyl-CoA + 1-(9Z-octadecenoyl)-sn-glycero-3-phosphate = 1-(9Z)-octadecenoyl-2-heptadecanoyl-sn-glycero-3-phosphate + CoA. It catalyses the reaction 1-(9Z-octadecenoyl)-sn-glycero-3-phosphate + (9Z,12Z)-octadecadienoyl-CoA = 1-(9Z)-octadecenoyl-2-(9Z,12Z)-octadecadienoyl-sn-glycero-3-phosphate + CoA. The catalysed reaction is 1-(9Z-octadecenoyl)-sn-glycero-3-phosphate + tetradecanoyl-CoA = 1-(9Z)-octadecenoyl-2-tetradecanoyl-sn-glycero-3-phosphate + CoA. It carries out the reaction pentadecanoyl-CoA + 1-(9Z-octadecenoyl)-sn-glycero-3-phosphate = 1-(9Z)-octadecenoyl-2-pentadecanoyl-sn-glycero-3-phosphate + CoA. The enzyme catalyses nonadecanoyl-CoA + 1-(9Z-octadecenoyl)-sn-glycero-3-phosphate = 1-(9Z)-octadecenoyl-2-nonadecanoyl-sn-glycero-3-phosphate + CoA. It catalyses the reaction 1-hexadecanoyl-sn-glycero-3-phosphocholine + (9Z)-octadecenoyl-CoA = 1-hexadecanoyl-2-(9Z-octadecenoyl)-sn-glycero-3-phosphocholine + CoA. The catalysed reaction is 1-O-hexadecyl-sn-glycero-3-phosphocholine + acetyl-CoA = 1-O-hexadecyl-2-acetyl-sn-glycero-3-phosphocholine + CoA. It carries out the reaction 1-O-octadecyl-sn-glycero-3-phosphocholine + acetyl-CoA = 1-O-octadecyl-2-acetyl-sn-glycero-3-phosphocholine + CoA. The enzyme catalyses 1-hexadecanoyl-sn-glycero-3-phosphocholine + acetyl-CoA = 1-hexadecanoyl-2-acetyl-sn-glycero-3-phosphocholine + CoA. It catalyses the reaction 1-octadecanoyl-sn-glycero-3-phosphocholine + acetyl-CoA = 1-octadecanoyl-2-acetyl-sn-glycero-3-phosphocholine + CoA. The catalysed reaction is a 1-O-(1Z-alkenyl)-sn-glycero-3-phosphocholine + acetyl-CoA = 1-O-(1Z)-alkenyl-2-acetyl-sn-glycero-3-phosphocholine + CoA. It carries out the reaction 1-O-octadecyl-sn-glycero-3-phosphocholine + (5Z,8Z,11Z,14Z)-eicosatetraenoyl-CoA = 1-O-octadecyl-2-(5Z,8Z,11Z,14Z)-eicosatetraenoyl-sn-glycero-3-phosphocholine + CoA. The protein operates within lipid metabolism; phospholipid metabolism. In terms of biological role, exhibits both acyltransferase and acetyltransferase activities. Activity is calcium-dependent. Catalyzes the conversion of lysophosphatidylcholine (1-acyl-sn-glycero-3-phosphocholine or LPC) into phosphatidylcholine (1,2-diacyl-sn-glycero-3-phosphocholine or PC). Catalyzes the conversion 1-acyl-sn-glycerol-3-phosphate (lysophosphatidic acid or LPA) into 1,2-diacyl-sn-glycerol-3-phosphate (phosphatidic acid or PA) by incorporating an acyl moiety at the sn-2 position of the glycerol backbone. Involved in platelet-activating factor (PAF) biosynthesis by catalyzing the conversion of the PAF precursor, 1-O-alkyl-sn-glycero-3-phosphocholine (lyso-PAF) into 1-O-alkyl-2-acetyl-sn-glycero-3-phosphocholine (PAF). This chain is Lysophosphatidylcholine acyltransferase 2 (lpcat2), found in Danio rerio (Zebrafish).